The sequence spans 141 residues: Hemoglobin subunit alpha (141 aa).

The 141-residue stretch at 1–141 (VLSPADKSNV…VSTVLVSKYR (141 aa)) folds into the Globin domain. S3 bears the Phosphoserine mark. Residues K7 and K11 each carry the N6-succinyllysine modification. K16 carries the post-translational modification N6-acetyllysine; alternate. Residue K16 is modified to N6-succinyllysine; alternate. Position 24 is a phosphotyrosine (Y24). S35 carries the post-translational modification Phosphoserine. An N6-succinyllysine modification is found at K40. The residue at position 49 (S49) is a Phosphoserine. Position 58 (H58) interacts with O2. Position 87 (H87) interacts with heme b. At S102 the chain carries Phosphoserine. The residue at position 108 (T108) is a Phosphothreonine. The residue at position 124 (S124) is a Phosphoserine. T134 carries the phosphothreonine modification. S138 is subject to Phosphoserine.

It belongs to the globin family. In terms of assembly, heterotetramer of two alpha chains and two beta chains. As to expression, red blood cells.

Involved in oxygen transport from the lung to the various peripheral tissues. Its function is as follows. Hemopressin acts as an antagonist peptide of the cannabinoid receptor CNR1. Hemopressin-binding efficiently blocks cannabinoid receptor CNR1 and subsequent signaling. The sequence is that of Hemoglobin subunit alpha (HBA) from Chalinolobus morio (Chocolate-wattled bat).